The sequence spans 513 residues: Arabinoxylan arabinofuranohydrolase (513 aa).

A signal peptide spans 1–26; that stretch reads MRKKCSVCLWILVLLLSCLSGKSAYA. D50 functions as the Proton acceptor in the catalytic mechanism. Residue E251 is the Proton donor of the active site. Residue N314 participates in substrate binding. The 130-residue stretch at 382–511 folds into the CBM6 domain; sequence NRVEAETFAW…LFNFDYWQFT (130 aa). Ca(2+)-binding residues include E385, E387, N409, Q410, and D506.

The protein resides in the secreted. The catalysed reaction is Hydrolysis of terminal non-reducing alpha-L-arabinofuranoside residues in alpha-L-arabinosides.. It participates in glycan degradation; xylan degradation. Cleaves arabinose units from O-2- or O-3-monosubstituted xylose residues, thereby assisting in arabinoxylan (AX) and short-chain arabinoxylo-oligosaccharide (AXOS) degradation. Is more active on wheat bran AXOS than on wheat water-extractable AX and rye water-extractable AX. Does not display endoxylanase, xylosidase or arabinanase activity. The polypeptide is Arabinoxylan arabinofuranohydrolase (xynD) (Bacillus subtilis (strain 168)).